We begin with the raw amino-acid sequence, 775 residues long: Putative late blight resistance protein homolog R1A-3 (775 aa).

Positions 16 to 39 form a coiled coil; it reads PRMNEEIVGFEDVIENLRKKLLSE. An NB-ARC domain is found at 17-237; sequence RMNEEIVGFE…LSEMEKEVEC (221 aa). 50–57 contributes to the ATP binding site; it reads GMPGLGKT. An HMA domain is found at 711 to 775; sequence IKKMILQFDI…VGKLIDSGML (65 aa).

The protein belongs to the disease resistance NB-LRR family.

It localises to the cytoplasm. The protein localises to the membrane. Its function is as follows. Confers resistance to late blight (Phytophthora infestans) races carrying the avirulence gene Avr1. Resistance proteins guard the plant against pathogens that contain an appropriate avirulence protein via an indirect interaction with this avirulence protein. That triggers a defense system including the hypersensitive response, which restricts the pathogen growth. This chain is Putative late blight resistance protein homolog R1A-3 (R1A-3), found in Solanum demissum (Wild potato).